The sequence spans 859 residues: Leucine--tRNA ligase (859 aa).

Positions 42 to 52 (PYPSGRLHMGH) match the 'HIGH' region motif. The 'KMSKS' region signature appears at 618–622 (KMSKS). Lysine 621 serves as a coordination point for ATP.

This sequence belongs to the class-I aminoacyl-tRNA synthetase family.

The protein resides in the cytoplasm. The enzyme catalyses tRNA(Leu) + L-leucine + ATP = L-leucyl-tRNA(Leu) + AMP + diphosphate. The polypeptide is Leucine--tRNA ligase (Shewanella sp. (strain ANA-3)).